Reading from the N-terminus, the 284-residue chain is Gap junction beta-1 protein (284 aa).

At 1-22 (MNWTGLYTLLSGVNRHSTAIGR) the chain is on the cytoplasmic side. Residues 23 to 45 (VWLSVIFIFRIMVLVVAAESVWG) traverse the membrane as a helical segment. The Extracellular portion of the chain corresponds to 46 to 75 (DEKSSFICNTLQPGCNSVCYDHFFPISHVR). A helical transmembrane segment spans residues 76–95 (LWSLQLILVSTPALLVAMHV). The Cytoplasmic segment spans residues 96-130 (AHQQHIEKKMLRLEGHGDPLHLEEVKRHKVHISGT). A helical transmembrane segment spans residues 131–153 (LWWTYVISVVFRLLFEAAFMYVF). The Extracellular portion of the chain corresponds to 154-191 (YLLYPGYAMVRLVKCDAYPCPNTVDCFVSRPTEKTIFT). The helical transmembrane segment at 192–214 (VFMLAASGICIILNVAEVVYLIF) threads the bilayer. The Cytoplasmic segment spans residues 215-284 (RACARRAQRR…AEKSDRCSAC (70 aa)). A phosphoserine mark is found at Ser-233, Ser-259, Ser-267, and Ser-278.

The protein belongs to the connexin family. Beta-type (group I) subfamily. A connexon is composed of a hexamer of connexins. Interacts with CNST.

The protein resides in the cell membrane. Its subcellular location is the cell junction. It is found in the gap junction. In terms of biological role, one gap junction consists of a cluster of closely packed pairs of transmembrane channels, the connexons, through which materials of low MW diffuse from one cell to a neighboring cell. In Bos taurus (Bovine), this protein is Gap junction beta-1 protein (GJB1).